The primary structure comprises 146 residues: Holo-[acyl-carrier-protein] synthase (146 aa).

Mg(2+)-binding residues include Asp-8 and Glu-61.

Belongs to the P-Pant transferase superfamily. AcpS family. Mg(2+) serves as cofactor.

Its subcellular location is the cytoplasm. It catalyses the reaction apo-[ACP] + CoA = holo-[ACP] + adenosine 3',5'-bisphosphate + H(+). Transfers the 4'-phosphopantetheine moiety from coenzyme A to a Ser of acyl-carrier-protein. This chain is Holo-[acyl-carrier-protein] synthase, found in Rhodopseudomonas palustris (strain TIE-1).